Here is a 325-residue protein sequence, read N- to C-terminus: Putative S-adenosyl-L-methionine-dependent methyltransferase MT0917 (325 aa).

Residues Asp-126 and 155–156 (DL) each bind S-adenosyl-L-methionine.

It belongs to the UPF0677 family.

Functionally, exhibits S-adenosyl-L-methionine-dependent methyltransferase activity. The polypeptide is Putative S-adenosyl-L-methionine-dependent methyltransferase MT0917 (Mycobacterium tuberculosis (strain CDC 1551 / Oshkosh)).